The chain runs to 231 residues: uncharacterized protein (231 aa).

This is an uncharacterized protein from Escherichia coli (strain K12).